Here is a 367-residue protein sequence, read N- to C-terminus: Putative F-box protein At3g21130 (367 aa).

In terms of domain architecture, F-box spans 4-50 (KRNTVYLSEDLIVEILSRVSAVSLARLRTTSKRWNALVKDERLAKKH).

This is Putative F-box protein At3g21130 from Arabidopsis thaliana (Mouse-ear cress).